The primary structure comprises 516 residues: 2-isopropylmalate synthase (516 aa).

The region spanning 5–267 (VIIFDTTLRD…TTGIKHDEIS (263 aa)) is the Pyruvate carboxyltransferase domain. 4 residues coordinate Mn(2+): D14, H202, H204, and N238. Positions 392-516 (KLNYLSVQSG…IKQKKSVATV (125 aa)) are regulatory domain.

This sequence belongs to the alpha-IPM synthase/homocitrate synthase family. LeuA type 1 subfamily. Homodimer. It depends on Mn(2+) as a cofactor.

Its subcellular location is the cytoplasm. The enzyme catalyses 3-methyl-2-oxobutanoate + acetyl-CoA + H2O = (2S)-2-isopropylmalate + CoA + H(+). It participates in amino-acid biosynthesis; L-leucine biosynthesis; L-leucine from 3-methyl-2-oxobutanoate: step 1/4. Catalyzes the condensation of the acetyl group of acetyl-CoA with 3-methyl-2-oxobutanoate (2-ketoisovalerate) to form 3-carboxy-3-hydroxy-4-methylpentanoate (2-isopropylmalate). The polypeptide is 2-isopropylmalate synthase (Vibrio cholerae serotype O1 (strain ATCC 39315 / El Tor Inaba N16961)).